We begin with the raw amino-acid sequence, 290 residues long: Chitinase 10 (290 aa).

Residues 1–28 (MAKPTPAPRATPFLLAAVLSIVVVAASG) form the signal peptide. Intrachain disulfides connect cysteine 70-cysteine 132 and cysteine 144-cysteine 153. The Proton donor role is filled by glutamate 114. N-linked (GlcNAc...) asparagine glycans are attached at residues asparagine 193 and asparagine 234. The cysteines at positions 252 and 284 are disulfide-linked.

It belongs to the glycosyl hydrolase 19 family. Chitinase class I subfamily. As to expression, expressed at low levels in roots, leaves and meristems.

It carries out the reaction Random endo-hydrolysis of N-acetyl-beta-D-glucosaminide (1-&gt;4)-beta-linkages in chitin and chitodextrins.. The protein is Chitinase 10 (Cht10) of Oryza sativa subsp. japonica (Rice).